The sequence spans 492 residues: Solute carrier family 2, facilitated glucose transporter member 1 (492 aa).

Position 1 is an N-acetylmethionine (Met-1). The Cytoplasmic segment spans residues 1–11; that stretch reads MEPSSKKVTGR. A helical transmembrane segment spans residues 12 to 33; it reads LMLAVGGAVLGSLQFGYNTGVI. The Extracellular segment spans residues 34 to 66; the sequence is NAPQKVIEEFYNQTWNHRYGESIPSTTLTTLWS. Asn-45 carries an N-linked (GlcNAc...) asparagine glycan. The helical transmembrane segment at 67 to 87 threads the bilayer; the sequence is LSVAIFSVGGMIGSFSVGLFV. Residues 88 to 90 are Cytoplasmic-facing; the sequence is NRF. The chain crosses the membrane as a helical span at residues 91 to 112; that stretch reads GRRNSMLMMNLLAFVSAVLMGF. Residues 113 to 120 are Extracellular-facing; sequence SKLGKSFE. The helical transmembrane segment at 121–144 threads the bilayer; it reads MLILGRFIIGVYCGLTTGFVPMYV. At 145–155 the chain is on the cytoplasmic side; that stretch reads GEVSPTALRGA. A helical membrane pass occupies residues 156–176; sequence LGTLHQLGIVVGILIAQVFGL. Gln-161 lines the D-glucose pocket. At 177-185 the chain is on the extracellular side; that stretch reads DSIMGNADL. The chain crosses the membrane as a helical span at residues 186–206; sequence WPLLLSVIFIPALLQCILLPF. Residues 207–271 are Cytoplasmic-facing; that stretch reads CPESPRFLLI…LFRSPAYRQP (65 aa). Position 226 is a phosphoserine (Ser-226). A helical membrane pass occupies residues 272 to 293; the sequence is ILIAVVLQLSQQLSGINAVFYY. Residues 282 to 283 and Asn-288 each bind D-glucose; that span reads QQ. The Extracellular portion of the chain corresponds to 294–306; that stretch reads STSIFEKAGVQQP. The helical transmembrane segment at 307-328 threads the bilayer; it reads VYATIGSGIVNTAFTVVSLFVV. Asn-317 contacts D-glucose. At 329 to 334 the chain is on the cytoplasmic side; sequence ERAGRR. A helical transmembrane segment spans residues 335 to 355; it reads TLHLIGLAGMAGCAVLMTIAL. Topologically, residues 356 to 365 are extracellular; it reads ALLEQLPWMS. The helical transmembrane segment at 366 to 388 threads the bilayer; the sequence is YLSIVAIFGFVAFFEVGPGPIPW. D-glucose-binding residues include Glu-380 and Trp-388. The Cytoplasmic segment spans residues 389–401; sequence FIVAELFSQGPRP. The helical transmembrane segment at 402 to 422 threads the bilayer; sequence AAVAVAGFSNWTSNFIVGMCF. Residues 423–429 lie on the Extracellular side of the membrane; it reads QYVEQLC. A helical transmembrane segment spans residues 430 to 450; the sequence is GPYVFIIFTVLLVLFFIFTYF. Residues 451 to 492 are Cytoplasmic-facing; it reads KVPETKGRTFDEIASGFRQGGASQSDKTPEELFHPLGADSQV. Position 465 is a phosphoserine (Ser-465). A disordered region spans residues 468-492; it reads RQGGASQSDKTPEELFHPLGADSQV. The residue at position 478 (Thr-478) is a Phosphothreonine. Ser-490 carries the phosphoserine modification.

The protein belongs to the major facilitator superfamily. Sugar transporter (TC 2.A.1.1) family. Glucose transporter subfamily. As to quaternary structure, found in a complex with ADD2, DMTN and SLC2A1. Interacts (via C-terminus cytoplasmic region) with DMTN. Interacts with SNX27; the interaction is required when endocytosed to prevent degradation in lysosomes and promote recycling to the plasma membrane. Interacts with STOM. Interacts with GIPC (via PDZ domain). Interacts with SGTA (via Gln-rich region). Interacts with isoform 1 of BSG. Interacts with SMIM43; the interaction may promote SLC2A1-mediated glucose transport to meet the energy needs of mesendoderm differentiation. In terms of processing, phosphorylation at Ser-226 by PKC promotes glucose uptake by increasing cell membrane localization. In terms of tissue distribution, detected in osteoblastic cells (at protein level). Detected in brain, and at lower levels in kidney, heart and lung.

The protein localises to the cell membrane. The protein resides in the photoreceptor inner segment. It catalyses the reaction D-glucose(out) = D-glucose(in). Its activity is regulated as follows. The uptake of glucose is inhibited by cytochalasin B. Glucose uptake is increased in response to phorbol ester 12-O-tetradecanoylphorbol-13-acetate (TPA) treatment: TPA-induced glucose uptake requires phosphorylation at Ser-226. Functionally, facilitative glucose transporter, which is responsible for constitutive or basal glucose uptake. Has a very broad substrate specificity; can transport a wide range of aldoses including both pentoses and hexoses. Most important energy carrier of the brain: present at the blood-brain barrier and assures the energy-independent, facilitative transport of glucose into the brain. In association with BSG and NXNL1, promotes retinal cone survival by increasing glucose uptake into photoreceptors. Required for mesendoderm differentiation. The sequence is that of Solute carrier family 2, facilitated glucose transporter member 1 from Rattus norvegicus (Rat).